Consider the following 321-residue polypeptide: NADH-ubiquinone oxidoreductase chain 1 (321 aa).

A run of 8 helical transmembrane segments spans residues isoleucine 9 to leucine 29, isoleucine 75 to methionine 95, leucine 106 to glycine 126, threonine 151 to phenylalanine 171, histidine 177 to alanine 197, valine 219 to phenylalanine 239, proline 256 to tryptophan 276, and tyrosine 297 to glycine 317.

Belongs to the complex I subunit 1 family.

Its subcellular location is the mitochondrion inner membrane. It carries out the reaction a ubiquinone + NADH + 5 H(+)(in) = a ubiquinol + NAD(+) + 4 H(+)(out). Its function is as follows. Core subunit of the mitochondrial membrane respiratory chain NADH dehydrogenase (Complex I) that is believed to belong to the minimal assembly required for catalysis. Complex I functions in the transfer of electrons from NADH to the respiratory chain. The immediate electron acceptor for the enzyme is believed to be ubiquinone. This Lycodon semicarinatus (Ryukyu odd-tooth snake) protein is NADH-ubiquinone oxidoreductase chain 1 (MT-ND1).